Here is a 459-residue protein sequence, read N- to C-terminus: Putrescine aminotransferase (459 aa).

Pyridoxal 5'-phosphate is bound by residues Gly-150–Thr-151 and Gln-274. Lys-300 carries the N6-(pyridoxal phosphate)lysine modification. Position 332 (Thr-332) interacts with pyridoxal 5'-phosphate.

This sequence belongs to the class-III pyridoxal-phosphate-dependent aminotransferase family. Putrescine aminotransferase subfamily. It depends on pyridoxal 5'-phosphate as a cofactor.

It catalyses the reaction an alkane-alpha,omega-diamine + 2-oxoglutarate = an omega-aminoaldehyde + L-glutamate. It carries out the reaction putrescine + 2-oxoglutarate = 1-pyrroline + L-glutamate + H2O. The catalysed reaction is cadaverine + 2-oxoglutarate = 5-aminopentanal + L-glutamate. It participates in amine and polyamine degradation; putrescine degradation; 4-aminobutanal from putrescine (transaminase route): step 1/1. Its function is as follows. Catalyzes the aminotransferase reaction from putrescine to 2-oxoglutarate, leading to glutamate and 4-aminobutanal, which spontaneously cyclizes to form 1-pyrroline. This is the first step in one of two pathways for putrescine degradation, where putrescine is converted into 4-aminobutanoate (gamma-aminobutyrate or GABA) via 4-aminobutanal. Also functions as a cadaverine transaminase in a a L-lysine degradation pathway to succinate that proceeds via cadaverine, glutarate and L-2-hydroxyglutarate. This Shigella flexneri serotype 5b (strain 8401) protein is Putrescine aminotransferase.